A 594-amino-acid polypeptide reads, in one-letter code: MKIRSPIVSVLGHVDHGKTTLLDHIRGSAVASREAGGITQHIGATEIPMDVIEGICGDFLKKFSIRETLPGLFFIDTPGHEAFTTLRKRGGALADLAILIVDINEGFKPQTQEALNILRMYRTPFVVAANKIDRIHGWRVHEGRPFMETFSKQDIQVQQKLDTKVYELVGKLHEEGFESERFDRVTDFASQVSIIPISAITGEGIPELLTMLMGLAQQYLREQLKIEEDSPARGTILEVKEETGLGMTIDAVIYDGILRKDDTIAMMTSKDVISTRIRSLLKPRPLEEMRESRKKFQKVDEVVAAAGIKIVAPGIDDVMAGSPLRVVTDPEKVREEILSEIEDIKIDTDEAGVVVKADTLGSLEAVVKILRDMYVPIKVADIGDVSRRDVVNAGIALQEDRVYGAIIAFNVKVIPSAAQELKNSDIKLFQGNVIYRLMEEYEEWVRGIEEEKKKKWMEAIIKPASIRLIPKLVFRQSKPAIGGVEVLTGVIRQGYPLMNDDGETVGTVESMQDKGENLKSASRGQKVAMAIKDAVYGKTIHEGDTLYVDIPENHYHILKEQLSGDLTDEELDLMDKIAEIKRKKNPDWGMKAPF.

Positions 3–220 (IRSPIVSVLG…MLMGLAQQYL (218 aa)) constitute a tr-type G domain. Residues 12–19 (GHVDHGKT) form a G1 region. GTP is bound at residue 12 to 19 (GHVDHGKT). Residues 37-41 (GITQH) are G2. The segment at 76–79 (DTPG) is G3. GTP-binding positions include 76–80 (DTPGH) and 130–133 (NKID). The G4 stretch occupies residues 130 to 133 (NKID). Residues 198–200 (SAI) form a G5 region.

The protein belongs to the TRAFAC class translation factor GTPase superfamily. Classic translation factor GTPase family. IF-2 subfamily.

Its function is as follows. Function in general translation initiation by promoting the binding of the formylmethionine-tRNA to ribosomes. Seems to function along with eIF-2. This chain is Probable translation initiation factor IF-2 (infB), found in Methanothermobacter thermautotrophicus (strain ATCC 29096 / DSM 1053 / JCM 10044 / NBRC 100330 / Delta H) (Methanobacterium thermoautotrophicum).